Reading from the N-terminus, the 210-residue chain is Ribosomal RNA large subunit methyltransferase E (210 aa).

The S-adenosyl-L-methionine site is built by Gly-61, Trp-63, Asp-81, Asp-97, and Asp-122. Lys-162 serves as the catalytic Proton acceptor. Basic and acidic residues predominate over residues 187-196 (KPEASRKRSP). Positions 187–210 (KPEASRKRSPEVYALGQGKRAHMK) are disordered.

This sequence belongs to the class I-like SAM-binding methyltransferase superfamily. RNA methyltransferase RlmE family.

The protein localises to the cytoplasm. The enzyme catalyses uridine(2552) in 23S rRNA + S-adenosyl-L-methionine = 2'-O-methyluridine(2552) in 23S rRNA + S-adenosyl-L-homocysteine + H(+). In terms of biological role, specifically methylates the uridine in position 2552 of 23S rRNA at the 2'-O position of the ribose in the fully assembled 50S ribosomal subunit. The sequence is that of Ribosomal RNA large subunit methyltransferase E from Stenotrophomonas maltophilia (strain K279a).